A 496-amino-acid chain; its full sequence is Transactivator/viroplasmin protein (496 aa).

Residues 102-128 (RPNQGIQIPKKNEDHSSSSSKEEKGIQ) are disordered. Positions 111 to 128 (KKNEDHSSSSSKEEKGIQ) are enriched in basic and acidic residues.

It belongs to the caulimoviridae viroplasmin family.

Its subcellular location is the host cytoplasm. Its function is as follows. Enhances the translation of downstream ORFs on polycistronic mRNAs derived from carnation etched ring virus. This is Transactivator/viroplasmin protein from Dianthus caryophyllus (Carnation).